Consider the following 112-residue polypeptide: 2Fe-2S ferredoxin (112 aa).

A 2Fe-2S ferredoxin-type domain is found at 5–107 (IKVTFIINDG…GIKVRIPATT (103 aa)). [2Fe-2S] cluster-binding residues include Cys42, Cys48, Cys51, and Cys88.

This sequence belongs to the adrenodoxin/putidaredoxin family. The cofactor is [2Fe-2S] cluster.

In terms of biological role, ferredoxin are iron-sulfur proteins that transfer electrons in a wide variety of metabolic reactions. The chain is 2Fe-2S ferredoxin (fdxB) from Rickettsia conorii (strain ATCC VR-613 / Malish 7).